Consider the following 134-residue polypeptide: UPF0412 protein YaaI (134 aa).

The signal sequence occupies residues 1–23 (MRSVLTISASLLFGLALSSVAHA).

It belongs to the UPF0412 family.

In Salmonella choleraesuis (strain SC-B67), this protein is UPF0412 protein YaaI.